Here is a 114-residue protein sequence, read N- to C-terminus: Fumarate reductase subunit D (114 aa).

3 helical membrane passes run 24–44 (VSAI…PFGL), 50–70 (LITF…TIFP), and 92–112 (GGFI…FAVI).

This sequence belongs to the FrdD family. Part of an enzyme complex containing four subunits: a flavoprotein (FrdA), an iron-sulfur protein (FrdB), and two hydrophobic anchor proteins (FrdC and FrdD).

The protein localises to the cell inner membrane. In terms of biological role, anchors the catalytic components of the fumarate reductase complex to the cell membrane, binds quinones. This chain is Fumarate reductase subunit D, found in Haemophilus influenzae (strain ATCC 51907 / DSM 11121 / KW20 / Rd).